Reading from the N-terminus, the 119-residue chain is uncharacterized protein (119 aa).

Transmembrane regions (helical) follow at residues 19–39 (FYPS…PSFL) and 68–88 (FPWF…PWLL).

The protein localises to the membrane. This is an uncharacterized protein from Saccharomyces cerevisiae (strain ATCC 204508 / S288c) (Baker's yeast).